The following is a 305-amino-acid chain: UDP-3-O-acyl-N-acetylglucosamine deacetylase (305 aa).

Residues H79, H238, and D242 each contribute to the Zn(2+) site. H265 acts as the Proton donor in catalysis.

It belongs to the LpxC family. It depends on Zn(2+) as a cofactor.

It carries out the reaction a UDP-3-O-[(3R)-3-hydroxyacyl]-N-acetyl-alpha-D-glucosamine + H2O = a UDP-3-O-[(3R)-3-hydroxyacyl]-alpha-D-glucosamine + acetate. Its pathway is glycolipid biosynthesis; lipid IV(A) biosynthesis; lipid IV(A) from (3R)-3-hydroxytetradecanoyl-[acyl-carrier-protein] and UDP-N-acetyl-alpha-D-glucosamine: step 2/6. Functionally, catalyzes the hydrolysis of UDP-3-O-myristoyl-N-acetylglucosamine to form UDP-3-O-myristoylglucosamine and acetate, the committed step in lipid A biosynthesis. The protein is UDP-3-O-acyl-N-acetylglucosamine deacetylase of Vibrio cholerae serotype O1 (strain ATCC 39541 / Classical Ogawa 395 / O395).